An 879-amino-acid chain; its full sequence is Alanine--tRNA ligase (879 aa).

Positions 566, 570, 668, and 672 each coordinate Zn(2+).

This sequence belongs to the class-II aminoacyl-tRNA synthetase family. Requires Zn(2+) as cofactor.

Its subcellular location is the cytoplasm. The enzyme catalyses tRNA(Ala) + L-alanine + ATP = L-alanyl-tRNA(Ala) + AMP + diphosphate. Its function is as follows. Catalyzes the attachment of alanine to tRNA(Ala) in a two-step reaction: alanine is first activated by ATP to form Ala-AMP and then transferred to the acceptor end of tRNA(Ala). Also edits incorrectly charged Ser-tRNA(Ala) and Gly-tRNA(Ala) via its editing domain. This is Alanine--tRNA ligase from Clostridium novyi (strain NT).